Reading from the N-terminus, the 354-residue chain is Cysteine proteinase 1 (354 aa).

The first 24 residues, 1 to 24 (MARRNPLLFAIVVTILFVVCYGSA), serve as a signal peptide directing secretion. Residues 25–125 (LIAQTPPPVD…HKEDVHVDDS (101 aa)) constitute a propeptide, activation peptide. 3 disulfides stabilise this stretch: Cys150-Cys191, Cys184-Cys229, and Cys282-Cys330. Cys153 is an active-site residue. Asn208 is a glycosylation site (N-linked (GlcNAc...) asparagine). Active-site residues include His289 and Asn309.

The protein belongs to the peptidase C1 family.

In terms of biological role, the cysteine proteinases have a potential role in host-parasite interaction and virulence. This is Cysteine proteinase 1 (CYS1) from Leishmania pifanoi.